A 379-amino-acid chain; its full sequence is Elongation factor Ts, mitochondrial (379 aa).

A mitochondrion-targeting transit peptide spans 1 to 33 (MAWGQGAKRSILGLLFRSQHQTARAYSSSAFQT).

This sequence belongs to the EF-Ts family.

The protein localises to the mitochondrion. In terms of biological role, associates with the EF-Tu.GDP complex and induces the exchange of GDP to GTP. It remains bound to the aminoacyl-tRNA.EF-Tu.GTP complex up to the GTP hydrolysis stage on the ribosome. This Zea mays (Maize) protein is Elongation factor Ts, mitochondrial.